Reading from the N-terminus, the 150-residue chain is Large ribosomal subunit protein bL9 (150 aa).

This sequence belongs to the bacterial ribosomal protein bL9 family.

Functionally, binds to the 23S rRNA. The protein is Large ribosomal subunit protein bL9 of Clavibacter sepedonicus (Clavibacter michiganensis subsp. sepedonicus).